The sequence spans 774 residues: Acetyl-CoA decarbonylase/synthase complex subunit alpha (774 aa).

C73, C76, C77, C79, C84, and C94 together coordinate [4Fe-4S] cluster. H117 contacts CO. Residues H251, C279, and C318 each contribute to the [Ni-4Fe-4S] cluster site. 2 consecutive 4Fe-4S ferredoxin-type domains span residues 398–427 (LNEVVELAKQCTECGWCNRNCPNAFKVKEA) and 436–466 (FKGFIDLYKRCYGCGRCEAICPRNLPIVSMT). [4Fe-4S] cluster is bound by residues C408, C411, C414, C418, C446, C449, C452, and C456. [Ni-4Fe-4S] cluster is bound by residues C514, C543, and C578.

It belongs to the Ni-containing carbon monoxide dehydrogenase family. In terms of assembly, heterotetramer of two alpha and two epsilon subunits. The ACDS complex is made up of alpha, epsilon, beta, gamma and delta subunits with a probable stoichiometry of (alpha(2)epsilon(2))(4)-beta(8)-(gamma(1)delta(1))(8). Requires [4Fe-4S] cluster as cofactor. [Ni-4Fe-4S] cluster is required as a cofactor.

It carries out the reaction CO + 2 oxidized [2Fe-2S]-[ferredoxin] + H2O = 2 reduced [2Fe-2S]-[ferredoxin] + CO2 + 2 H(+). Its function is as follows. Part of the ACDS complex that catalyzes the reversible cleavage of acetyl-CoA, allowing autotrophic growth from CO(2). The alpha-epsilon subcomponent functions as a carbon monoxide dehydrogenase. The protein is Acetyl-CoA decarbonylase/synthase complex subunit alpha of Methanocaldococcus jannaschii (strain ATCC 43067 / DSM 2661 / JAL-1 / JCM 10045 / NBRC 100440) (Methanococcus jannaschii).